The chain runs to 81 residues: uncharacterized protein (81 aa).

Residues 1-58 form a disordered region; the sequence is MPQSKQQFKRQGARQRDSKGKFVKARTGMATAPPAAVSTAAPTASTMTPTGSSTTATI. Low complexity predominate over residues 30 to 58; the sequence is ATAPPAAVSTAAPTASTMTPTGSSTTATI.

This is an uncharacterized protein from Caenorhabditis elegans.